Here is a 580-residue protein sequence, read N- to C-terminus: Protein O-linked-mannose beta-1,4-N-acetylglucosaminyltransferase 2 (580 aa).

The Cytoplasmic segment spans residues 1–4; sequence MHLS. The helical; Signal-anchor for type II membrane protein transmembrane segment at 5-25 threads the bilayer; it reads AVFNALLVSVLAAVLWKHVRL. At 26 to 580 the chain is on the lumenal side; it reads REHAATLEEE…PFADVLVCNT (555 aa). N-linked (GlcNAc...) asparagine glycosylation is found at Asn99 and Asn276. The Fibronectin type-III domain occupies 488 to 580; sequence ARCQASVHGA…PFADVLVCNT (93 aa).

It belongs to the glycosyltransferase 61 family.

The protein localises to the endoplasmic reticulum membrane. It carries out the reaction 3-O-(alpha-D-mannosyl)-L-threonyl-[protein] + UDP-N-acetyl-alpha-D-glucosamine = 3-O-(N-acetyl-beta-D-glucosaminyl-(1-&gt;4)-alpha-D-mannosyl)-L-threonyl-[protein] + UDP + H(+). It participates in protein modification; protein glycosylation. O-linked mannose beta-1,4-N-acetylglucosaminyltransferase that transfers UDP-N-acetyl-D-glucosamine to the 4-position of the mannose to generate N-acetyl-D-glucosamine-beta-1,4-O-D-mannosylprotein. Involved in the biosynthesis of the phosphorylated O-mannosyl trisaccharide (N-acetylgalactosamine-beta-3-N-acetylglucosamine-beta-4-(phosphate-6-)mannose), a carbohydrate structure present in alpha-dystroglycan (DAG1), which is required for binding laminin G-like domain-containing extracellular proteins with high affinity. This is Protein O-linked-mannose beta-1,4-N-acetylglucosaminyltransferase 2 (POMGNT2) from Pan troglodytes (Chimpanzee).